A 118-amino-acid chain; its full sequence is Small ribosomal subunit protein uS13 (118 aa).

The disordered stretch occupies residues 94–118; the sequence is SLPVRGQRTKTNARTRKGPRKAIKK.

Belongs to the universal ribosomal protein uS13 family. As to quaternary structure, part of the 30S ribosomal subunit. Forms a loose heterodimer with protein S19. Forms two bridges to the 50S subunit in the 70S ribosome.

Its function is as follows. Located at the top of the head of the 30S subunit, it contacts several helices of the 16S rRNA. In the 70S ribosome it contacts the 23S rRNA (bridge B1a) and protein L5 of the 50S subunit (bridge B1b), connecting the 2 subunits; these bridges are implicated in subunit movement. Contacts the tRNAs in the A and P-sites. The polypeptide is Small ribosomal subunit protein uS13 (Aeromonas hydrophila subsp. hydrophila (strain ATCC 7966 / DSM 30187 / BCRC 13018 / CCUG 14551 / JCM 1027 / KCTC 2358 / NCIMB 9240 / NCTC 8049)).